A 314-amino-acid chain; its full sequence is Large ribosomal subunit protein uL10 (314 aa).

Positions 285–314 (GAAAGGAAAEEEKEEEEESDEEGGFGDLFG) are disordered. Acidic residues predominate over residues 293 to 308 (AEEEKEEEEESDEEGG). S303 carries the post-translational modification Phosphoserine; by CK1.

The protein belongs to the universal ribosomal protein uL10 family. Component of the large ribosomal subunit. P0 forms a pentameric complex by interaction with dimers of P1 and P2. Phosphorylated.

Ribosomal protein P0 is the functional equivalent of E.coli protein L10. The sequence is that of Large ribosomal subunit protein uL10 from Podospora anserina (Pleurage anserina).